The chain runs to 70 residues: Small ribosomal subunit protein bS21 (70 aa).

It belongs to the bacterial ribosomal protein bS21 family.

The protein is Small ribosomal subunit protein bS21 of Nitratiruptor sp. (strain SB155-2).